A 1245-amino-acid polypeptide reads, in one-letter code: Pesticidal crystal protein Cry5Ba (1245 aa).

Residues 1219 to 1245 (PLPTDDQSSDGNTTSNTNSNTSMNNNQ) are disordered. Residues 1222–1245 (TDDQSSDGNTTSNTNSNTSMNNNQ) show a composition bias toward low complexity.

This sequence belongs to the delta endotoxin family.

Its function is as follows. Promotes colloidosmotic lysis by binding to the midgut epithelial cells of hymenopteran species. The sequence is that of Pesticidal crystal protein Cry5Ba (cry5Ba) from Bacillus thuringiensis.